The sequence spans 330 residues: MLFRFGVVVPPAVAGARQELLLAGSRPELGRWEPHGAVRLRPAGTAAGAAALALQEPGLWLAEVELEAYEEAGGAEPGRVDTFWYKFLQREPGGELHWEGNGPHHDRCCTYNEDNLVDGVYCLPVGHWIEATGHTNEMKHTTDFYFNIAGHQAMHYSRILPNIWLGSCPRQLEHVTIKLKHELGVTAVMNFQTEWDIIQNSSGCNRYPEPMTPDTMMKLYKEEGLSYIWMPTPDMSTEGRVQMLPQAVCLLHALLENGHTVYVHCNAGVGRSTAAVCGWLHYVIGWNLRKVQYFIMAKRPAVYIDEDALAQAQQDFSQKFGKVHSSICAL.

One can recognise a CBM20 domain in the interval methionine 1–leucine 123. Residue serine 25 is modified to Phosphoserine; by AMPK. Residues tryptophan 32, lysine 86, glycine 102–aspartate 106, aspartate 196, aspartate 234, and arginine 240 each bind substrate. One can recognise a Tyrosine-protein phosphatase domain in the interval histidine 155–lysine 322. Cysteine 265 serves as the catalytic Phosphocysteine intermediate. A Glucan phosphatase signature motif CXAGXGR motif is present at residues cysteine 265–arginine 271. Substrate is bound by residues asparagine 266–arginine 271 and tyrosine 303.

This sequence belongs to the protein-tyrosine phosphatase family. As to quaternary structure, homodimer. Interacts with PPP1R3B, PPP1R3C, HIRIP5, and EPM2AIP1. Binds glycogen and Lafora bodies. Interacts with NHLRC1/malin (via the NHL repeats). Forms a complex with NHLRC1/malin and HSP70. Interacts with PPP1R3D; in the presence of NHLC1/malin the interaction leads to ubiquitination and autophagic degradation of PPP1R3D. Interacts (via the phosphatase domain) with MAPT/Tau; the interaction dephosphorylates MAPT. Interacts with PRDM8. Post-translationally, polyubiquitinated by NHLRC1/malin. Phosphorylation on Ser-25 by AMPK affects the phosphatase activity of the enzyme and its ability to homodimerize and interact with NHLRC1, PPP1R3C or PRKAA2. In terms of tissue distribution, detected in skeletal muscle and in brain (at protein level). Widely expressed. Higher levels of expression are found in heart, brain, liver, skeletal muscle and kidney.

Its subcellular location is the cytoplasm. The protein resides in the endoplasmic reticulum membrane. It localises to the cell membrane. The enzyme catalyses O-phospho-L-tyrosyl-[protein] + H2O = L-tyrosyl-[protein] + phosphate. It catalyses the reaction O-phospho-L-seryl-[protein] + H2O = L-seryl-[protein] + phosphate. The catalysed reaction is O-phospho-L-threonyl-[protein] + H2O = L-threonyl-[protein] + phosphate. Plays an important role in preventing glycogen hyperphosphorylation and the formation of insoluble aggregates, via its activity as glycogen phosphatase, and by promoting the ubiquitination of proteins involved in glycogen metabolism via its interaction with the E3 ubiquitin ligase NHLRC1/malin. Dephosphorylates phosphotyrosine and synthetic substrates, such as para-nitrophenylphosphate (pNPP), and has low activity with phosphoserine and phosphothreonine substrates (in vitro). Has also been shown to dephosphorylate MAPT. Shows strong phosphatase activity towards complex carbohydrates in vitro, avoiding glycogen hyperphosphorylation which is associated with reduced branching and formation of insoluble aggregates. Forms a complex with NHLRC1/malin and HSP70, which suppresses the cellular toxicity of misfolded proteins by promoting their degradation through the ubiquitin-proteasome system (UPS). Acts as a scaffold protein to facilitate PPP1R3C/PTG ubiquitination by NHLRC1/malin. Also promotes proteasome-independent protein degradation through the macroautophagy pathway. The sequence is that of Laforin (Epm2a) from Mus musculus (Mouse).